Reading from the N-terminus, the 442-residue chain is Elongation factor 1-alpha (442 aa).

Residues 6–229 form the tr-type G domain; sequence KPHMNLIVIG…ALDNLKPPSV (224 aa). Residues 15–22 form a G1 region; that stretch reads GHVDHGKS. 15 to 22 is a binding site for GTP; that stretch reads GHVDHGKS. S22 serves as a coordination point for Mg(2+). A G2 region spans residues 71 to 75; it reads GVTID. The G3 stretch occupies residues 92 to 95; the sequence is DAPG. Residues 92 to 96 and 154 to 157 each bind GTP; these read DAPGH and NKMD. Residues 154-157 form a G4 region; it reads NKMD. The G5 stretch occupies residues 195 to 197; the sequence is SAW.

It belongs to the TRAFAC class translation factor GTPase superfamily. Classic translation factor GTPase family. EF-Tu/EF-1A subfamily.

Its subcellular location is the cytoplasm. It catalyses the reaction GTP + H2O = GDP + phosphate + H(+). Functionally, GTP hydrolase that promotes the GTP-dependent binding of aminoacyl-tRNA to the A-site of ribosomes during protein biosynthesis. The protein is Elongation factor 1-alpha of Ignicoccus hospitalis (strain KIN4/I / DSM 18386 / JCM 14125).